Consider the following 191-residue polypeptide: Probable protein adenylyltransferase HI_0977 (191 aa).

One can recognise a Fido domain in the interval 37-162; that stretch reads GSTKGLQQIH…NDLEIRFLLQ (126 aa). Residues 67-68, 112-114, Arg118, and Gln145 each bind ATP; these read KG and GNG.

The protein belongs to the fic family.

It catalyses the reaction L-tyrosyl-[protein] + ATP = O-(5'-adenylyl)-L-tyrosyl-[protein] + diphosphate. The catalysed reaction is L-threonyl-[protein] + ATP = 3-O-(5'-adenylyl)-L-threonyl-[protein] + diphosphate. In terms of biological role, probable adenylyltransferase that mediates the addition of adenosine 5'-monophosphate (AMP) to specific residues of target proteins. In Haemophilus influenzae (strain ATCC 51907 / DSM 11121 / KW20 / Rd), this protein is Probable protein adenylyltransferase HI_0977.